Here is a 400-residue protein sequence, read N- to C-terminus: tRNA-specific 2-thiouridylase MnmA (400 aa).

Residues 19–26 (AMSGGVDS) and leucine 45 each bind ATP. Cysteine 113 acts as the Nucleophile in catalysis. Residues cysteine 113 and cysteine 210 are joined by a disulfide bond. Glycine 137 contacts ATP. The interval 160–162 (RDQ) is interaction with tRNA. Cysteine 210 acts as the Cysteine persulfide intermediate in catalysis.

This sequence belongs to the MnmA/TRMU family.

The protein resides in the cytoplasm. It catalyses the reaction S-sulfanyl-L-cysteinyl-[protein] + uridine(34) in tRNA + AH2 + ATP = 2-thiouridine(34) in tRNA + L-cysteinyl-[protein] + A + AMP + diphosphate + H(+). Its function is as follows. Catalyzes the 2-thiolation of uridine at the wobble position (U34) of tRNA, leading to the formation of s(2)U34. This chain is tRNA-specific 2-thiouridylase MnmA, found in Rhodopseudomonas palustris (strain BisA53).